A 249-amino-acid polypeptide reads, in one-letter code: ATP synthase subunit a (249 aa).

5 helical membrane-spanning segments follow: residues 33–53 (GQVF…SLLA), 92–112 (VPFI…GALI), 131–151 (INTT…AGFS), 196–216 (LVVA…AMIL), and 217–237 (GLFT…SYIG).

Belongs to the ATPase A chain family. F-type ATPases have 2 components, CF(1) - the catalytic core - and CF(0) - the membrane proton channel. CF(1) has five subunits: alpha(3), beta(3), gamma(1), delta(1), epsilon(1). CF(0) has four main subunits: a, b, b' and c.

The protein resides in the cellular thylakoid membrane. In terms of biological role, key component of the proton channel; it plays a direct role in the translocation of protons across the membrane. This is ATP synthase subunit a from Synechococcus elongatus (strain ATCC 33912 / PCC 7942 / FACHB-805) (Anacystis nidulans R2).